The following is a 273-amino-acid chain: Galactose-binding lectin (273 aa).

The N-terminal stretch at 1 to 23 is a signal peptide; it reads MKPFCVFLTFFLLLAASSKKVDS. Mn(2+) contacts are provided by Glu144 and Asp146. 4 residues coordinate Ca(2+): Asp146, Tyr148, Asn150, and Asp155. Residues Asp155 and His160 each contribute to the Mn(2+) site.

This sequence belongs to the leguminous lectin family. In terms of assembly, homotetramer.

D-galactose specific lectin. In Arachis hypogaea (Peanut), this protein is Galactose-binding lectin.